The sequence spans 833 residues: Leucine--tRNA ligase (833 aa).

Positions 41–52 (PYPSGAGLHVGH) match the 'HIGH' region motif. The short motif at 610-614 (KMSKS) is the 'KMSKS' region element. Lysine 613 contacts ATP.

This sequence belongs to the class-I aminoacyl-tRNA synthetase family.

It localises to the cytoplasm. The catalysed reaction is tRNA(Leu) + L-leucine + ATP = L-leucyl-tRNA(Leu) + AMP + diphosphate. The sequence is that of Leucine--tRNA ligase from Streptococcus pneumoniae (strain 70585).